A 578-amino-acid chain; its full sequence is NADPH oxidase 4 (578 aa).

At 1 to 16 (MALSWRSWLANEGVKH) the chain is on the cytoplasmic side. Residues 17-37 (LCLLVWLSLNVLLFWKTFLLY) form a helical membrane-spanning segment. Over 38–62 (NQGPEYYYIHQMLGLGLCLSRASAS) the chain is Extracellular. The region spanning 58-303 (RASASVLNLN…YCAERLYRCI (246 aa)) is the Ferric oxidoreductase domain. The helical transmembrane segment at 63-83 (VLNLNCSLILLPMCRTVLAYL) threads the bilayer. Topologically, residues 84 to 104 (RGSQKVPSRRTRRLLDKSKTL) are cytoplasmic. Residues 105 to 125 (HITCGITICIFSGVHVAAHLV) form a helical membrane-spanning segment. Topologically, residues 126 to 154 (NALNFSVNYSEHFLALNAARYQNEDPRKL) are extracellular. N133 carries an N-linked (GlcNAc...) asparagine glycan. A helical membrane pass occupies residues 155–175 (LFTTVPGLTGVCMVVVLFLMV). Residues 176–188 (TASTYAIRVSNYD) are Cytoplasmic-facing. The chain crosses the membrane as a helical span at residues 189–209 (IFWYTHNLFFVFYMLLLLHVS). Residues 210 to 424 (GGLLKYQTNL…SPFEESLNYE (215 aa)) are Extracellular-facing. Residues 218–273 (NLDTHPPGCISLNRTPSQNMSIADYVSEHFHGSLPGGFSKLEDHYQKTLVKICLEE) form an E-loop; essential for H2O2 generating catalytic activity region. The tract at residues 248–575 (HGSLPGGFSK…YGTKFEYNKE (328 aa)) is mediates interaction with TLR4. Residues 304–419 (RSNKPVTIIS…DGPFGSPFEE (116 aa)) form the FAD-binding FR-type domain. A helical transmembrane segment spans residues 425 to 445 (VSLCVAGGIGVTPFASILNTL). Topologically, residues 446-578 (LDDWKPYKLR…KFEYNKESFS (133 aa)) are cytoplasmic.

As to quaternary structure, interacts with TLR4. Interacts with, relocalizes and stabilizes CYBA/p22phox. Interacts with protein disulfide isomerase. Interacts with PPP1R15A. Interacts with LRRC8A; this interaction prevents the ubiquitin-mediated degradation of LRRC8A. Requires heme as cofactor. N-glycosylation is required for the function. In terms of tissue distribution, expressed in vascular smooth muscle.

It localises to the cytoplasm. Its subcellular location is the endoplasmic reticulum membrane. It is found in the cell membrane. The protein resides in the cell junction. The protein localises to the focal adhesion. It localises to the nucleus. It catalyses the reaction NADPH + 2 O2 = 2 superoxide + NADP(+) + H(+). The enzyme catalyses NADPH + O2 + H(+) = H2O2 + NADP(+). With respect to regulation, activated by insulin. Inhibited by diphenylene iodonium. Inhibited by plumbagin. Activated by phorbol 12-myristate 13-acetate (PMA). Its function is as follows. NADPH oxidase that catalyzes predominantly the reduction of oxygen to H2O2. Can also catalyze to a smaller extent, the reduction of oxygen to superoxide. May function as an oxygen sensor regulating the KCNK3/TASK-1 potassium channel and HIF1A activity. May regulate insulin signaling cascade. May play a role in apoptosis, bone resorption and lipolysaccharide-mediated activation of NFKB. May produce superoxide in the nucleus and play a role in regulating gene expression upon cell stimulation. Promotes ferroptosis, reactive oxygen species production and reduced glutathione (GSH) levels by activating NLRP3 inflammasome activation and cytokine release. This is NADPH oxidase 4 (Nox4) from Rattus norvegicus (Rat).